The following is a 965-amino-acid chain: Phosphatidylethanolamine N-methyltransferase (965 aa).

Residues 1-82 (MDRGLSTGTN…SPSEPKNLSD (82 aa)) lie on the Lumenal side of the membrane. The tract at residues 34–54 (PTVTNASNGKDKAGKTFGRTP) is disordered. The helical transmembrane segment at 83–103 (LVVLTILAGHIFLLWILPSGA) threads the bilayer. Residues 104–106 (KIP) lie on the Cytoplasmic side of the membrane. A helical transmembrane segment spans residues 107–127 (VFAVIYLFWRSCYNAGIGWLL). The Lumenal segment spans residues 128–192 (HNQSHHKTLV…EYNTWLVFRR (65 aa)). Residues 193–213 (LVDLILMCDFASYCLFAIACS) form a helical membrane-spanning segment. Residues 214–220 (RHPANES) are Cytoplasmic-facing. The helical transmembrane segment at 221 to 241 (VLMTVIRWTSGIALVLFNLWV) threads the bilayer. Topologically, residues 242–274 (KLDAHRVVKDYAWYWGDFFYLIDQELTFDGVFE) are lumenal. The helical transmembrane segment at 275 to 295 (MAPHPMYSVGYAGYYGISLMA) threads the bilayer. Residues 296-297 (AS) lie on the Cytoplasmic side of the membrane. Residues 298–318 (YKVLFISIIAHAAQFAFLVLV) form a helical membrane-spanning segment. Topologically, residues 319–394 (ENPHIDKTYN…LDLHRITDTS (76 aa)) are lumenal. Residues 326 to 368 (TYNPPPPRKRTITEHDAASQRSQSPDTPNAPSVSEENVPNATT) are disordered. Over residues 344 to 368 (SQRSQSPDTPNAPSVSEENVPNATT) the composition is skewed to polar residues. Residues 395–415 (SILVQFLMFSLTVLTPSTPWY) form a helical membrane-spanning segment. Position 416 (glutamine 416) is a topological domain, cytoplasmic. A helical membrane pass occupies residues 417–437 (FLFVANAAIWRLWYSVGIGYL). At 438-470 (LNRQSNCKSWTRHFVKYGETPHEAWNQWKGTYH) the chain is on the lumenal side. The chain crosses the membrane as a helical span at residues 471–491 (LSMVMCYASFISAVWKMYTLP). Over 492–503 (SNWGYGLAILRH) the chain is Cytoplasmic. The chain crosses the membrane as a helical span at residues 504 to 524 (VLGAGLISLQIWTSVSIYESL). Topologically, residues 525 to 559 (GEFGWFYGDFFFDESPKLTYNGIYRFLNNPERVLG) are lumenal. Residues 560 to 580 (LAGVWGAVLITASGTVAFLAF) traverse the membrane as a helical segment. The Cytoplasmic portion of the chain corresponds to 581–965 (LSHILSLGFI…GATTPTESKE (385 aa)).

Belongs to the class VI-like SAM-binding methyltransferase superfamily. CHO2 family.

The protein resides in the endoplasmic reticulum membrane. The enzyme catalyses a 1,2-diacyl-sn-glycero-3-phosphoethanolamine + S-adenosyl-L-methionine = a 1,2-diacyl-sn-glycero-3-phospho-N-methylethanolamine + S-adenosyl-L-homocysteine + H(+). Its pathway is phospholipid metabolism; phosphatidylcholine biosynthesis. Functionally, catalyzes the first step of the methylation pathway of phosphatidylcholine biosynthesis, the SAM-dependent methylation of phosphatidylethanolamine (PE) to phosphatidylmonomethylethanolamine (PMME). The polypeptide is Phosphatidylethanolamine N-methyltransferase (Emericella nidulans (strain FGSC A4 / ATCC 38163 / CBS 112.46 / NRRL 194 / M139) (Aspergillus nidulans)).